The following is a 147-amino-acid chain: Hemoglobin subunit beta (147 aa).

Residues 3–147 (HWTAEEKQII…VAHALARKYH (145 aa)) form the Globin domain. Positions 64 and 93 each coordinate heme b.

Heterotetramer of two alpha (or alpha-D) and two beta chains. As to expression, red blood cells.

Involved in oxygen transport from the lung to the various peripheral tissues. The beta chain is a component of adult hemoglobin A and D. The protein is Hemoglobin subunit beta of Aythya fuligula (Tufted duck).